A 183-amino-acid polypeptide reads, in one-letter code: uncharacterized protein (183 aa).

A disordered region spans residues 54-89; the sequence is DAASQSDPLPGGDGLTGGDSKATRRTSPRYYPPSEA.

This is an uncharacterized protein from Human cytomegalovirus (strain AD169) (HHV-5).